The sequence spans 204 residues: Protein GrpE (204 aa).

2 stretches are compositionally biased toward basic and acidic residues: residues 1-21 (MEELEKDKIERNEEMSEEVKG) and 36-46 (EEKIETEVEQK). The tract at residues 1 to 46 (MEELEKDKIERNEEMSEEVKGEGPPSELEQSEEVVEEKIETEVEQK) is disordered.

It belongs to the GrpE family. In terms of assembly, homodimer.

Its subcellular location is the cytoplasm. Functionally, participates actively in the response to hyperosmotic and heat shock by preventing the aggregation of stress-denatured proteins, in association with DnaK and GrpE. It is the nucleotide exchange factor for DnaK and may function as a thermosensor. Unfolded proteins bind initially to DnaJ; upon interaction with the DnaJ-bound protein, DnaK hydrolyzes its bound ATP, resulting in the formation of a stable complex. GrpE releases ADP from DnaK; ATP binding to DnaK triggers the release of the substrate protein, thus completing the reaction cycle. Several rounds of ATP-dependent interactions between DnaJ, DnaK and GrpE are required for fully efficient folding. This Caldanaerobacter subterraneus subsp. tengcongensis (strain DSM 15242 / JCM 11007 / NBRC 100824 / MB4) (Thermoanaerobacter tengcongensis) protein is Protein GrpE.